Consider the following 540-residue polypeptide: E3 ubiquitin-protein ligase rnf8-A (540 aa).

The FHA domain occupies 30-84 (VTLGRGLGVTYQLKPTLCPLMISRTHCLFKQNTGGEWTVTDNKSLNGVWRNKERL). Residues 128–205 (LIRPLPDKTK…SGTESRLNDS (78 aa)) are disordered. 2 stretches are compositionally biased toward polar residues: residues 152-162 (ASGNEGPSNFS) and 179-200 (SSHTTDLYKQPTVEPTASGTES). The RING-type zinc finger occupies 382–420 (CIICSEHFIEAVTLNCAHSFCSYCIKSWKKRKEECPICR). A disordered region spans residues 517–540 (GTDELDSSDFESDDDEEEDSFLII). The span at 519 to 540 (DELDSSDFESDDDEEEDSFLII) shows a compositional bias: acidic residues.

The protein belongs to the RNF8 family. As to quaternary structure, homodimer. Forms a E2-E3 ubiquitin ligase complex composed of the rnf8 homodimer and a E2 heterodimer of ube2n and ube2v2.

It localises to the nucleus. The catalysed reaction is S-ubiquitinyl-[E2 ubiquitin-conjugating enzyme]-L-cysteine + [acceptor protein]-L-lysine = [E2 ubiquitin-conjugating enzyme]-L-cysteine + N(6)-ubiquitinyl-[acceptor protein]-L-lysine.. The protein operates within protein modification; protein ubiquitination. In terms of biological role, E3 ubiquitin-protein ligase that plays a key role in DNA damage signaling via 2 distinct roles: by mediating the 'Lys-63'-linked ubiquitination of histones H2A and H2AX and promoting the recruitment of DNA repair proteins at double-strand breaks (DSBs) sites, and by catalyzing 'Lys-48'-linked ubiquitination to remove target proteins from DNA damage sites. Following DNA DSBs, it is recruited to the sites of damage by ATM-phosphorylated mdc1 and catalyzes the 'Lys-63'-linked ubiquitination of histones H2A and H2AX, thereby promoting the formation of tp53bp1 and brca1 ionizing radiation-induced foci (IRIF). H2A ubiquitination also mediates the ATM-dependent transcriptional silencing at regions flanking DSBs in cis, a mechanism to avoid collision between transcription and repair intermediates. Also catalyzes the formation of 'Lys-48'-linked polyubiquitin chains, leading to degradation of substrate proteins. In addition to its function in damage signaling, also plays a role in higher-order chromatin structure by mediating extensive chromatin decondensation. This chain is E3 ubiquitin-protein ligase rnf8-A, found in Xenopus laevis (African clawed frog).